Consider the following 345-residue polypeptide: MNILGIETSCDETSAAVVQNGRVISNIISSQLIHRDFGGVVPELASREHERLIVSVVDAAVNEANIQKNDLDIIAATAGPGLIGAVMVGLCFAQGMAYALKKPLVPVNHIEAHIFSAFIRDDSDAPPPENDFISLTVSGGHTMLCIVNQDLSYKVIGRTIDDAAGEAFDKTGKMLGLDYPAGPVIDRLAKEGNPKFHHFPRALTAQSRTSKSYRDNFDFSFSGLKTSVLQYISTHDSAYIERHLSDIAASVQEAITSVLVMKTIAAAEKYGIDAISVAGGVSANSRLRHSMQEACDRQGIRLFIPGIVYSTDNAAMIATMANLKLERGKTEPNNYDVAPFASFRG.

Residues His109 and His113 each contribute to the Fe cation site. Residues 136–140 (TVSGG), Asp169, Gly182, Asp186, and Asn284 each bind substrate. Asp312 lines the Fe cation pocket.

The protein belongs to the KAE1 / TsaD family. Fe(2+) serves as cofactor.

The protein resides in the cytoplasm. It carries out the reaction L-threonylcarbamoyladenylate + adenosine(37) in tRNA = N(6)-L-threonylcarbamoyladenosine(37) in tRNA + AMP + H(+). Functionally, required for the formation of a threonylcarbamoyl group on adenosine at position 37 (t(6)A37) in tRNAs that read codons beginning with adenine. Is involved in the transfer of the threonylcarbamoyl moiety of threonylcarbamoyl-AMP (TC-AMP) to the N6 group of A37, together with TsaE and TsaB. TsaD likely plays a direct catalytic role in this reaction. This is tRNA N6-adenosine threonylcarbamoyltransferase from Prosthecochloris aestuarii (strain DSM 271 / SK 413).